Here is a 201-residue protein sequence, read N- to C-terminus: Small ribosomal subunit protein uS4c (201 aa).

The disordered stretch occupies residues 15-43 (LGALPGLTRKRPRSGSDLRNQSRSGKRSQ). The S4 RNA-binding domain occupies 89 to 150 (MRLDNILFRL…EQRSRALIQN (62 aa)).

The protein belongs to the universal ribosomal protein uS4 family. In terms of assembly, part of the 30S ribosomal subunit. Contacts protein S5. The interaction surface between S4 and S5 is involved in control of translational fidelity.

Its subcellular location is the plastid. It localises to the chloroplast. One of the primary rRNA binding proteins, it binds directly to 16S rRNA where it nucleates assembly of the body of the 30S subunit. Its function is as follows. With S5 and S12 plays an important role in translational accuracy. This Drimys granadensis protein is Small ribosomal subunit protein uS4c (rps4).